The chain runs to 359 residues: Chaperone protein DnaJ (359 aa).

A J domain is found at 3 to 68 (DYYEILGVPK…ERRQTYDRYG (66 aa)). The segment at 128 to 205 (GVSKDIKYKI…CAGKGFIEEQ (78 aa)) adopts a CR-type zinc-finger fold. Residues cysteine 141, cysteine 144, cysteine 157, cysteine 160, cysteine 179, cysteine 182, cysteine 193, and cysteine 196 each contribute to the Zn(2+) site. 4 CXXCXGXG motif repeats span residues 141-148 (CKTCDGTG), 157-164 (CPYCGGSG), 179-186 (CPFCKGSG), and 193-200 (CHDCAGKG).

Belongs to the DnaJ family. As to quaternary structure, homodimer. It depends on Zn(2+) as a cofactor.

The protein resides in the cytoplasm. Functionally, participates actively in the response to hyperosmotic and heat shock by preventing the aggregation of stress-denatured proteins and by disaggregating proteins, also in an autonomous, DnaK-independent fashion. Unfolded proteins bind initially to DnaJ; upon interaction with the DnaJ-bound protein, DnaK hydrolyzes its bound ATP, resulting in the formation of a stable complex. GrpE releases ADP from DnaK; ATP binding to DnaK triggers the release of the substrate protein, thus completing the reaction cycle. Several rounds of ATP-dependent interactions between DnaJ, DnaK and GrpE are required for fully efficient folding. Also involved, together with DnaK and GrpE, in the DNA replication of plasmids through activation of initiation proteins. This is Chaperone protein DnaJ from Campylobacter hominis (strain ATCC BAA-381 / DSM 21671 / CCUG 45161 / LMG 19568 / NCTC 13146 / CH001A).